The chain runs to 1087 residues: Error-prone DNA polymerase 3 (1087 aa).

Residues 1040 to 1064 (AGRGDEFAHGSPGSSDTRDKSKPVV) are disordered.

The protein belongs to the DNA polymerase type-C family. DnaE2 subfamily.

The protein resides in the cytoplasm. The catalysed reaction is DNA(n) + a 2'-deoxyribonucleoside 5'-triphosphate = DNA(n+1) + diphosphate. In terms of biological role, DNA polymerase involved in damage-induced mutagenesis and translesion synthesis (TLS). It is not the major replicative DNA polymerase. The polypeptide is Error-prone DNA polymerase 3 (Agrobacterium fabrum (strain C58 / ATCC 33970) (Agrobacterium tumefaciens (strain C58))).